The primary structure comprises 232 residues: MELSEHEEDAGDVGGGCSSPPTPPHRVLTSAAPETIRCRYHECLRNHAAASGGHVVDGCGEFMPASTEEPLACAACGCHRSFHRRDPSPGRAGAARLPQLHLPASINSRAPPALLLPPAAAASKQGLPFPGYGTPSGGTGTTTASSSDERLRPSPVQPRRRSRTTFTREQKEQMLAFAERVGWRIQRQEEATVEHFCAQVGVRRQALKVWMHNNKHSFKQKQQQENRQEQQQ.

Positions 1–11 are enriched in acidic residues; that stretch reads MELSEHEEDAG. The interval 1–25 is disordered; the sequence is MELSEHEEDAGDVGGGCSSPPTPPH. A ZF-HD dimerization-type; degenerate zinc finger spans residues 40–86; the sequence is YHECLRNHAAASGGHVVDGCGEFMPASTEEPLACAACGCHRSFHRRD. The segment at 126–170 is disordered; that stretch reads GLPFPGYGTPSGGTGTTTASSSDERLRPSPVQPRRRSRTTFTREQ. A DNA-binding region (homeobox) is located at residues 159–222; sequence RRRSRTTFTR…NNKHSFKQKQ (64 aa).

As to quaternary structure, homo- and heterodimer with other ZFHD proteins.

The protein resides in the nucleus. In terms of biological role, putative transcription factor. This is Zinc-finger homeodomain protein 5 (ZHD5) from Oryza sativa subsp. japonica (Rice).